The chain runs to 238 residues: 3-dehydroquinate dehydratase (238 aa).

Residues 35 to 37 (ELR) and Arg70 each bind 3-dehydroquinate. The Proton donor/acceptor role is filled by His133. Residue Lys160 is the Schiff-base intermediate with substrate of the active site. Arg202 and Gln225 together coordinate 3-dehydroquinate.

It belongs to the type-I 3-dehydroquinase family. In terms of assembly, homodimer.

It carries out the reaction 3-dehydroquinate = 3-dehydroshikimate + H2O. The protein operates within metabolic intermediate biosynthesis; chorismate biosynthesis; chorismate from D-erythrose 4-phosphate and phosphoenolpyruvate: step 3/7. Functionally, involved in the third step of the chorismate pathway, which leads to the biosynthesis of aromatic amino acids. Catalyzes the cis-dehydration of 3-dehydroquinate (DHQ) and introduces the first double bond of the aromatic ring to yield 3-dehydroshikimate. This chain is 3-dehydroquinate dehydratase, found in Staphylococcus aureus (strain bovine RF122 / ET3-1).